An 89-amino-acid chain; its full sequence is Small ribosomal subunit protein uS15 (89 aa).

Belongs to the universal ribosomal protein uS15 family. Part of the 30S ribosomal subunit. Forms a bridge to the 50S subunit in the 70S ribosome, contacting the 23S rRNA.

One of the primary rRNA binding proteins, it binds directly to 16S rRNA where it helps nucleate assembly of the platform of the 30S subunit by binding and bridging several RNA helices of the 16S rRNA. Its function is as follows. Forms an intersubunit bridge (bridge B4) with the 23S rRNA of the 50S subunit in the ribosome. The polypeptide is Small ribosomal subunit protein uS15 (Gloeobacter violaceus (strain ATCC 29082 / PCC 7421)).